The following is a 377-amino-acid chain: MAKRDYYEILGVAKNASEAELKKAFRRLAMKHHPDRNPGDKESEEKFKEAKEAYEILTDPQKRAAYDQFGHAGVDPSAGGGARGGASFSDIFEDIFGDIFGGGRGGGSRVYRGSDLQYNLELTLEEAVFGTEVKIRVPSLVECGECHGSGAEKGTTPETCGTCGGVGQVRMQQGFFSVQQTCPRCHGTGKMITHPCKACHGQGRVEEHKTLSVKVPAGVDSGDRIRLSGEGEAGINGGPPGDLYVQIHVKAHKLFTRKGNDLMCEVPISFATAALGGELEIPTLDGRVNLKIPEETQSGRLFRLRAKGVKSVHGGAQGDLICRVSVETPVNLTKRQKELLKELDETMKAGGTRHSPQEEGWLDGVKGFFEDLKFWNK.

The 66-residue stretch at Asp-5–Gly-70 folds into the J domain. The CR-type zinc-finger motif lies at Gly-130–His-208. Positions 143, 146, 160, 163, 182, 185, 196, and 199 each coordinate Zn(2+). CXXCXGXG motif repeat units follow at residues Cys-143 to Gly-150, Cys-160 to Gly-167, Cys-182 to Gly-189, and Cys-196 to Gly-203.

This sequence belongs to the DnaJ family. In terms of assembly, homodimer. It depends on Zn(2+) as a cofactor.

Its subcellular location is the cytoplasm. Functionally, participates actively in the response to hyperosmotic and heat shock by preventing the aggregation of stress-denatured proteins and by disaggregating proteins, also in an autonomous, DnaK-independent fashion. Unfolded proteins bind initially to DnaJ; upon interaction with the DnaJ-bound protein, DnaK hydrolyzes its bound ATP, resulting in the formation of a stable complex. GrpE releases ADP from DnaK; ATP binding to DnaK triggers the release of the substrate protein, thus completing the reaction cycle. Several rounds of ATP-dependent interactions between DnaJ, DnaK and GrpE are required for fully efficient folding. Also involved, together with DnaK and GrpE, in the DNA replication of plasmids through activation of initiation proteins. This Thioalkalivibrio sulfidiphilus (strain HL-EbGR7) protein is Chaperone protein DnaJ.